We begin with the raw amino-acid sequence, 433 residues long: D-amino acid dehydrogenase (433 aa).

Residue 3-17 (VLVLGSGVIGTTSAY) participates in FAD binding.

It belongs to the DadA oxidoreductase family. FAD is required as a cofactor.

The enzyme catalyses a D-alpha-amino acid + A + H2O = a 2-oxocarboxylate + AH2 + NH4(+). It functions in the pathway amino-acid degradation; D-alanine degradation; NH(3) and pyruvate from D-alanine: step 1/1. In terms of biological role, oxidative deamination of D-amino acids. This Pseudomonas syringae pv. syringae (strain B728a) protein is D-amino acid dehydrogenase.